The chain runs to 506 residues: Histidine ammonia-lyase (506 aa).

The segment at residues 144–146 (ASG) is a cross-link (5-imidazolinone (Ala-Gly)). The residue at position 145 (S145) is a 2,3-didehydroalanine (Ser).

It belongs to the PAL/histidase family. Post-translationally, contains an active site 4-methylidene-imidazol-5-one (MIO), which is formed autocatalytically by cyclization and dehydration of residues Ala-Ser-Gly.

Its subcellular location is the cytoplasm. The enzyme catalyses L-histidine = trans-urocanate + NH4(+). It functions in the pathway amino-acid degradation; L-histidine degradation into L-glutamate; N-formimidoyl-L-glutamate from L-histidine: step 1/3. The polypeptide is Histidine ammonia-lyase (Legionella pneumophila subsp. pneumophila (strain Philadelphia 1 / ATCC 33152 / DSM 7513)).